The primary structure comprises 230 residues: Thymidylate kinase (230 aa).

20–27 (GGEGAGKS) is a binding site for ATP.

The protein belongs to the thymidylate kinase family.

The catalysed reaction is dTMP + ATP = dTDP + ADP. Functionally, phosphorylation of dTMP to form dTDP in both de novo and salvage pathways of dTTP synthesis. The polypeptide is Thymidylate kinase (Rhodopseudomonas palustris (strain ATCC BAA-98 / CGA009)).